The chain runs to 639 residues: Poly(A)-specific ribonuclease PARN (639 aa).

2 residues coordinate a divalent metal cation: D28 and E30. Phosphoserine is present on residues S163 and S167. Positions 178-245 (KKFIDQVVEK…ERYIVISKVD (68 aa)) constitute an R3H domain. Residue K220 is modified to N6-acetyllysine. The a divalent metal cation site is built by D292 and D382. K499 is subject to N6-acetyllysine. S530 carries the phosphoserine modification. S557 carries the phosphoserine; by MAPKAPK2 modification. Residues 560–639 (APSTVGKRNL…ATLFEVPDTW (80 aa)) are disordered. Residues S583 and S587 each carry the phosphoserine modification. A compositionally biased stretch (basic residues) spans 606–615 (KKAKKLKRMK). Phosphoserine occurs at positions 619, 623, and 628. Phosphothreonine is present on T631.

This sequence belongs to the CAF1 family. In terms of assembly, homodimer. Found in a mRNA decay complex with RENT1, RENT2 and RENT3B. Interacts with KHSRP. Interacts with CELF1/CUGBP1. Interacts with ZC3HAV1 in an RNA-independent manner. Interacts with DHX36. It depends on Mg(2+) as a cofactor. Phosphorylation by MAPKAPK2, preventing GADD45A mRNA degradation after genotoxic stress. In terms of tissue distribution, ubiquitous.

Its subcellular location is the nucleus. The protein resides in the cytoplasm. The protein localises to the nucleolus. It catalyses the reaction Exonucleolytic cleavage of poly(A) to 5'-AMP.. Functionally, 3'-exoribonuclease that has a preference for poly(A) tails of mRNAs, thereby efficiently degrading poly(A) tails. Exonucleolytic degradation of the poly(A) tail is often the first step in the decay of eukaryotic mRNAs and is also used to silence certain maternal mRNAs translationally during oocyte maturation and early embryonic development. Interacts with both the 3'-end poly(A) tail and the 5'-end cap structure during degradation, the interaction with the cap structure being required for an efficient degradation of poly(A) tails. Involved in nonsense-mediated mRNA decay, a critical process of selective degradation of mRNAs that contain premature stop codons. Also involved in degradation of inherently unstable mRNAs that contain AU-rich elements (AREs) in their 3'-UTR, possibly via its interaction with KHSRP. Probably mediates the removal of poly(A) tails of AREs mRNAs, which constitutes the first step of destabilization. Also able to recognize and trim poly(A) tails of microRNAs such as MIR21 and H/ACA box snoRNAs (small nucleolar RNAs) leading to microRNAs degradation or snoRNA increased stability. In Homo sapiens (Human), this protein is Poly(A)-specific ribonuclease PARN (PARN).